Here is a 318-residue protein sequence, read N- to C-terminus: Porphobilinogen deaminase (318 aa).

An S-(dipyrrolylmethanemethyl)cysteine modification is found at cysteine 241.

It belongs to the HMBS family. Monomer. Dipyrromethane is required as a cofactor.

It carries out the reaction 4 porphobilinogen + H2O = hydroxymethylbilane + 4 NH4(+). Its pathway is porphyrin-containing compound metabolism; protoporphyrin-IX biosynthesis; coproporphyrinogen-III from 5-aminolevulinate: step 2/4. Tetrapolymerization of the monopyrrole PBG into the hydroxymethylbilane pre-uroporphyrinogen in several discrete steps. The chain is Porphobilinogen deaminase from Geobacter sulfurreducens (strain ATCC 51573 / DSM 12127 / PCA).